Here is a 184-residue protein sequence, read N- to C-terminus: Small ribosomal subunit protein bS16 (184 aa).

The segment covering 150–160 (KKAAEAAEKAA) has biased composition (basic and acidic residues). The segment at 150-184 (KKAAEAAEKAAAEAPAEEATEAPAEEAAATEAAAE) is disordered. A compositionally biased stretch (acidic residues) spans 164–173 (PAEEATEAPA). The segment covering 174–184 (EEAAATEAAAE) has biased composition (low complexity).

It belongs to the bacterial ribosomal protein bS16 family.

This is Small ribosomal subunit protein bS16 from Bacteroides thetaiotaomicron (strain ATCC 29148 / DSM 2079 / JCM 5827 / CCUG 10774 / NCTC 10582 / VPI-5482 / E50).